The primary structure comprises 87 residues: Sec-independent protein translocase protein TatA (87 aa).

The helical transmembrane segment at 1–21 (MGGMSITHWIVVAVVVMIFFG) threads the bilayer. The interval 40–87 (KKGMSEDDTTPPAAPPAPAPRLENQPLPPENTTQNVAQNVPNDIKNNQ) is disordered. Residues 69–87 (ENTTQNVAQNVPNDIKNNQ) are compositionally biased toward polar residues.

Belongs to the TatA/E family. As to quaternary structure, the Tat system comprises two distinct complexes: a TatABC complex, containing multiple copies of TatA, TatB and TatC subunits, and a separate TatA complex, containing only TatA subunits. Substrates initially bind to the TatABC complex, which probably triggers association of the separate TatA complex to form the active translocon.

It localises to the cell inner membrane. Part of the twin-arginine translocation (Tat) system that transports large folded proteins containing a characteristic twin-arginine motif in their signal peptide across membranes. TatA could form the protein-conducting channel of the Tat system. The polypeptide is Sec-independent protein translocase protein TatA (Zymomonas mobilis subsp. mobilis (strain ATCC 31821 / ZM4 / CP4)).